Consider the following 186-residue polypeptide: ADP-ribosylation factor-like protein 6 (186 aa).

G2 carries the N-myristoyl glycine lipid modification. GTP is bound by residues 24–31 (GLDNSGKT), 69–73 (DMSGQ), and 130–133 (NKMD).

This sequence belongs to the small GTPase superfamily. Arf family. As to quaternary structure, interacts with SEC61B, ARL6IP1, ARL6IP2, ARL6IP3, ARL6IP4 ARL6IP5 and ARL6IP6. Interacts (GTP-bound form) with the BBSome a complex that contains BBS1, BBS2, BBS4, BBS5, BBS7, BBS8/TTC8, BBS9 and BBIP10. Interacts (GTP-free form) with IFT27.

It localises to the cell projection. The protein resides in the cilium membrane. It is found in the cytoplasm. Its subcellular location is the cytoskeleton. The protein localises to the cilium axoneme. It localises to the cilium basal body. Involved in membrane protein trafficking at the base of the ciliary organelle. Mediates recruitment onto plasma membrane of the BBSome complex which would constitute a coat complex required for sorting of specific membrane proteins to the primary cilia. Together with the BBSome complex and LTZL1, controls SMO ciliary trafficking and contributes to the sonic hedgehog (SHH) pathway regulation. May regulate cilia assembly and disassembly and subsequent ciliary signaling events such as the Wnt signaling cascade. Isoform 2 may be required for proper retinal function and organization. The polypeptide is ADP-ribosylation factor-like protein 6 (ARL6) (Bos taurus (Bovine)).